Reading from the N-terminus, the 175-residue chain is Large ribosomal subunit protein uL18 (175 aa).

It belongs to the universal ribosomal protein uL18 family. Part of the 50S ribosomal subunit. Contacts the 5S and 23S rRNAs.

This is one of the proteins that bind and probably mediate the attachment of the 5S RNA into the large ribosomal subunit, where it forms part of the central protuberance. In Methanosphaerula palustris (strain ATCC BAA-1556 / DSM 19958 / E1-9c), this protein is Large ribosomal subunit protein uL18.